A 373-amino-acid chain; its full sequence is NADPH-dependent 3-keto-steroid reductase HSD3B3 (373 aa).

Residues 10–15 (GAGGFL), Y155, and K159 contribute to the NADP(+) site. K159 functions as the Proton donor in the catalytic mechanism. A helical transmembrane segment spans residues 288–308 (VALLYWFGFLLETVSFLLRPV).

This sequence belongs to the 3-beta-HSD family. As to expression, high levels in adrenal gland, kidney and male liver (at protein level). Low levels in female liver (at protein level). Expressed in ovaries (at protein level).

The protein localises to the endoplasmic reticulum membrane. It localises to the mitochondrion membrane. The catalysed reaction is a 3beta-hydroxysteroid + NADP(+) = a 3-oxosteroid + NADPH + H(+). It catalyses the reaction 5alpha-androstane-3beta,17beta-diol + NADP(+) = 17beta-hydroxy-5alpha-androstan-3-one + NADPH + H(+). It functions in the pathway steroid metabolism. In terms of biological role, responsible for the reduction of the oxo group on the C-3 of 5alpha-androstane steroids. Catalyzes the conversion of dihydrotestosterone to its inactive form 5alpha-androstanediol, that does not bind androgen receptor/AR. Does not function as an isomerase. The protein is NADPH-dependent 3-keto-steroid reductase HSD3B3 (HSD3B3) of Mesocricetus auratus (Golden hamster).